Reading from the N-terminus, the 204-residue chain is Ubiquitin-conjugating enzyme E2 S (204 aa).

The 147-residue stretch at 14-160 (QIIKQVAREI…AKMFTEIHAK (147 aa)) folds into the UBC core domain. Catalysis depends on C98, which acts as the Glycyl thioester intermediate. The span at 165-176 (SSNNISEGQQES) shows a compositional bias: polar residues. The interval 165 to 204 (SSNNISEGQQESLPGKKRVAVNEKMCDKKKKDKKRALKRL) is disordered. The segment covering 191 to 204 (DKKKKDKKRALKRL) has biased composition (basic residues).

The protein belongs to the ubiquitin-conjugating enzyme family.

The catalysed reaction is S-ubiquitinyl-[E1 ubiquitin-activating enzyme]-L-cysteine + [E2 ubiquitin-conjugating enzyme]-L-cysteine = [E1 ubiquitin-activating enzyme]-L-cysteine + S-ubiquitinyl-[E2 ubiquitin-conjugating enzyme]-L-cysteine.. Its pathway is protein modification; protein ubiquitination. Its function is as follows. Catalyzes the covalent attachment of ubiquitin to other proteins. Acts as an essential factor of the anaphase promoting complex/cyclosome (APC/C), a cell cycle-regulated ubiquitin ligase that controls progression through mitosis. Acts by specifically elongating polyubiquitin chains initiated by the E2 enzyme UBCH10 on APC/C substrates, enhancing the degradation of APC/C substrates by the proteasome and promoting mitotic exit. This chain is Ubiquitin-conjugating enzyme E2 S, found in Nematostella vectensis (Starlet sea anemone).